Reading from the N-terminus, the 138-residue chain is Small ribosomal subunit protein uS9 (138 aa).

It belongs to the universal ribosomal protein uS9 family.

The chain is Small ribosomal subunit protein uS9 (rps9) from Sulfolobus acidocaldarius (strain ATCC 33909 / DSM 639 / JCM 8929 / NBRC 15157 / NCIMB 11770).